The primary structure comprises 72 residues: Translation initiation factor IF-1 (72 aa).

The S1-like domain occupies 1–72 (MAKEESIEIE…TKGRITYRYK (72 aa)).

This sequence belongs to the IF-1 family. Component of the 30S ribosomal translation pre-initiation complex which assembles on the 30S ribosome in the order IF-2 and IF-3, IF-1 and N-formylmethionyl-tRNA(fMet); mRNA recruitment can occur at any time during PIC assembly.

It is found in the cytoplasm. In terms of biological role, one of the essential components for the initiation of protein synthesis. Stabilizes the binding of IF-2 and IF-3 on the 30S subunit to which N-formylmethionyl-tRNA(fMet) subsequently binds. Helps modulate mRNA selection, yielding the 30S pre-initiation complex (PIC). Upon addition of the 50S ribosomal subunit IF-1, IF-2 and IF-3 are released leaving the mature 70S translation initiation complex. This is Translation initiation factor IF-1 from Chlorobium chlorochromatii (strain CaD3).